Here is a 233-residue protein sequence, read N- to C-terminus: UPF0280 protein AF_0649 (233 aa).

This sequence belongs to the UPF0280 family.

The polypeptide is UPF0280 protein AF_0649 (Archaeoglobus fulgidus (strain ATCC 49558 / DSM 4304 / JCM 9628 / NBRC 100126 / VC-16)).